The primary structure comprises 342 residues: Ketol-acid reductoisomerase (NADP(+)) (342 aa).

The KARI N-terminal Rossmann domain occupies 2–182; sequence AELFYDDDAD…GGLRAAGIKT (181 aa). NADP(+) contacts are provided by residues 25 to 28, R48, S51, S53, and 83 to 86; these read YGSQ and DQHQ. H108 is a catalytic residue. An NADP(+)-binding site is contributed by G134. In terms of domain architecture, KARI C-terminal knotted spans 183-328; it reads TFTEETETDL…RELRKLFAWV (146 aa). Mg(2+) contacts are provided by D191, E195, E227, and E231. S252 is a substrate binding site.

The protein belongs to the ketol-acid reductoisomerase family. Mg(2+) is required as a cofactor.

The catalysed reaction is (2R)-2,3-dihydroxy-3-methylbutanoate + NADP(+) = (2S)-2-acetolactate + NADPH + H(+). It catalyses the reaction (2R,3R)-2,3-dihydroxy-3-methylpentanoate + NADP(+) = (S)-2-ethyl-2-hydroxy-3-oxobutanoate + NADPH + H(+). It functions in the pathway amino-acid biosynthesis; L-isoleucine biosynthesis; L-isoleucine from 2-oxobutanoate: step 2/4. It participates in amino-acid biosynthesis; L-valine biosynthesis; L-valine from pyruvate: step 2/4. In terms of biological role, involved in the biosynthesis of branched-chain amino acids (BCAA). Catalyzes an alkyl-migration followed by a ketol-acid reduction of (S)-2-acetolactate (S2AL) to yield (R)-2,3-dihydroxy-isovalerate. In the isomerase reaction, S2AL is rearranged via a Mg-dependent methyl migration to produce 3-hydroxy-3-methyl-2-ketobutyrate (HMKB). In the reductase reaction, this 2-ketoacid undergoes a metal-dependent reduction by NADPH to yield (R)-2,3-dihydroxy-isovalerate. The protein is Ketol-acid reductoisomerase (NADP(+)) of Beutenbergia cavernae (strain ATCC BAA-8 / DSM 12333 / CCUG 43141 / JCM 11478 / NBRC 16432 / NCIMB 13614 / HKI 0122).